The primary structure comprises 569 residues: MAEGGSLRNRTRFGSRSNEAMNHVDYPDENFVEEIQLNSDTEVMEKPRPIQIVLAHEDDHNFELDETALESILMQDHIRDLNVVVLSVAGAFRKGKSFLLDFMLRFMYSQSSSWIGGNYEPLTGFTWRGGCERETTGIQIWSEVFVVEKPDGSKVAVILMDTQGAFDSQSTIKDCATVFALSTMTSSVQVYNLSQNIQEDDLQHLQLFTEYGRLAMEEIYKKPFQTLMFLIRDWSYPYEHSYGLEGGNKFLEKRLQVKQNQHEELQNVRKHIHSCFTNIGCFLLPHPGLKVATNPYFDGRLVEIDDEFKKELRELVPLLLAPENLVEKEISGSKVTCRDLLEYFKAYIKIYQGEELPHPKSMLQATAEANNMAAVAGAKDTYSRSMEQVCGGDKPYIAPSDLERKHLDLKETCIKQFRSVKKMGGEEFCRRYQEQLEAEIEETYANFLKHNDGKNIFYAARTPATLFAVMFAMYIISGLTGFIGMNSIATICNLIMGLTLLSFCTWAYVKYSGEFRELGTLIDQIAEIIWEQLLKPLSDNLMEDNIRQTVRNSIKAGLTDQVSGRLKTN.

An N-terminal hypervariable region (HVR) region spans residues 1 to 49 (MAEGGSLRNRTRFGSRSNEAMNHVDYPDENFVEEIQLNSDTEVMEKPRP). At 1–464 (MAEGGSLRNR…NIFYAARTPA (464 aa)) the chain is on the cytoplasmic side. Residues 80 to 324 (DLNVVVLSVA…LVPLLLAPEN (245 aa)) form the GB1/RHD3-type G domain. GDP is bound by residues R93, K94, G95, K96, S97, F98, Q163, R232, and D233. Residues R93, K94, G95, K96, S97, and F98 each contribute to the GTP site. Residue S97 coordinates Mg(2+). R232 and D233 together coordinate GTP. A coiled-coil region spans residues 244-272 (LEGGNKFLEKRLQVKQNQHEELQNVRKHI). Residues V291 and N294 each contribute to the GDP site. V291 is a GTP binding site. Residues 362-453 (MLQATAEANN…YANFLKHNDG (92 aa)) are 3HB (three-helix bundle) domain. The interval 454-462 (KNIFYAART) is linker. A helical membrane pass occupies residues 465–485 (TLFAVMFAMYIISGLTGFIGM). Over 486-487 (NS) the chain is Lumenal. A helical transmembrane segment spans residues 488–508 (IATICNLIMGLTLLSFCTWAY). Residues 509 to 569 (VKYSGEFREL…DQVSGRLKTN (61 aa)) are Cytoplasmic-facing. Residues 535 to 569 (KPLSDNLMEDNIRQTVRNSIKAGLTDQVSGRLKTN) form an autoinhibitory domain region.

This sequence belongs to the TRAFAC class dynamin-like GTPase superfamily. GB1/RHD3 GTPase family. GB1 subfamily. As to quaternary structure, monomeric and homodimeric. The homodimer, transiently formed by two molecules on opposing membranes, is the active form mediating ER membrane fusion.

The protein localises to the endoplasmic reticulum membrane. The enzyme catalyses GTP + H2O = GDP + phosphate + H(+). In terms of biological role, atlastin-2 (ATL2) is a membrane-anchored GTPase that mediates the GTP-dependent fusion of endoplasmic reticulum (ER) membranes, maintaining the continuous ER network. It facilitates the formation of three-way junctions where ER tubules intersect. Two atlastin-2 on neighboring ER tubules bind GTP and form loose homodimers through the GB1/RHD3-type G domains and 3HB regions. Upon GTP hydrolysis, the 3HB regions tighten, pulling the membranes together to drive their fusion. After fusion, the homodimer disassembles upon release of inorganic phosphate (Pi). Subsequently, GDP dissociates, resetting the monomers to a conformation ready for a new fusion cycle. The chain is Atlastin-2 (atl2) from Xenopus laevis (African clawed frog).